Reading from the N-terminus, the 735-residue chain is MKFDNHTYIQNYTSSDDETIVLINPLILNLFNKTNYDISQSNKQKDSIYHLDINIKTNSKLDKKSKKIDRNQDEVDELAKSKTKSKKKVQVEFETDDEYLNVFNKPKHFDIVEKNIRKTEILNEIKTINSATGKKNKKLLSRKKEEIVEDNQIPKELRINSSLTVQEFAELTCISDIEIIRTLFLKGQAVTVNQILDINTIIELGKDFHINIQIEEKNGLNEVNIEKNNFIKFSENTIRRAPIVTILGHVDHGKTTLLDKIRQTQIAQKEAGGITQKIAAYKVNVQYKNENRNIVFLDTPGHEAFSNMRSRGINVTDIVILLVAADDGVKPQTIEAINAIKAAKLPIIVAINKIDKDQANIEKVQQELSKYELIPESWGGQTPMIPISASQGTNIDSLLELILLMADIENYQAIEEDLASGTILESHIDRTRGPIASILVQNGTLKLGDIIVTGTSLGKIRGMLDSEGNKINTLTPSSPGIIWGLNKSLNSGDKFQTFSNEKDAKTYFSKESENNKKITYNYISENPSNQILEESSKKILNFILKTDTQGSIEAIVNAISRIKTKQLQIKILYSNLGEVTETDVEFASTTNAFVLAFNTRLAPGAKKTARQLNIDIREYNVVYDLVEDIESLIAQHSEPEYKKLKIGAATVKAVFPLGKNFVAGIIINEGKIVRSAHIQVQRKSGLVFEGDITTIKIVKKDVEEVSEGNECGLFIEEFSEWKVGDSIEIFELIQI.

The 173-residue stretch at 239 to 411 (RRAPIVTILG…ILLMADIENY (173 aa)) folds into the tr-type G domain. The G1 stretch occupies residues 248 to 255 (GHVDHGKT). 248–255 (GHVDHGKT) serves as a coordination point for GTP. A G2 region spans residues 273–277 (GITQK). A G3 region spans residues 298 to 301 (DTPG). GTP-binding positions include 298–302 (DTPGH) and 352–355 (NKID). Residues 352-355 (NKID) are G4. The segment at 388–390 (SAS) is G5.

Belongs to the TRAFAC class translation factor GTPase superfamily. Classic translation factor GTPase family. IF-2 subfamily.

It localises to the plastid. Its subcellular location is the chloroplast. Functionally, one of the essential components for the initiation of protein synthesis. Protects formylmethionyl-tRNA from spontaneous hydrolysis and promotes its binding to the 30S ribosomal subunits. Also involved in the hydrolysis of GTP during the formation of the 70S ribosomal complex. The polypeptide is Translation initiation factor IF-2, chloroplastic (infB) (Guillardia theta (Cryptophyte)).